We begin with the raw amino-acid sequence, 225 residues long: Octanoyltransferase (225 aa).

Residues P29–T210 form the BPL/LPL catalytic domain. Substrate is bound by residues R69 to H76, A141 to G143, and G154 to S156. C172 (acyl-thioester intermediate) is an active-site residue.

The protein belongs to the LipB family.

The protein resides in the cytoplasm. It catalyses the reaction octanoyl-[ACP] + L-lysyl-[protein] = N(6)-octanoyl-L-lysyl-[protein] + holo-[ACP] + H(+). Its pathway is protein modification; protein lipoylation via endogenous pathway; protein N(6)-(lipoyl)lysine from octanoyl-[acyl-carrier-protein]: step 1/2. Its function is as follows. Catalyzes the transfer of endogenously produced octanoic acid from octanoyl-acyl-carrier-protein onto the lipoyl domains of lipoate-dependent enzymes. Lipoyl-ACP can also act as a substrate although octanoyl-ACP is likely to be the physiological substrate. The protein is Octanoyltransferase of Burkholderia pseudomallei (strain K96243).